Reading from the N-terminus, the 261-residue chain is 5'-nucleotidase SurE (261 aa).

Residues Asp-8, Asp-9, Ser-43, and Asn-96 each contribute to the a divalent metal cation site.

Belongs to the SurE nucleotidase family. Requires a divalent metal cation as cofactor.

The protein resides in the cytoplasm. The enzyme catalyses a ribonucleoside 5'-phosphate + H2O = a ribonucleoside + phosphate. Nucleotidase that shows phosphatase activity on nucleoside 5'-monophosphates. This chain is 5'-nucleotidase SurE, found in Cereibacter sphaeroides (strain ATCC 17025 / ATH 2.4.3) (Rhodobacter sphaeroides).